Here is a 540-residue protein sequence, read N- to C-terminus: Extracellular matrix protein 1 (540 aa).

An N-terminal signal peptide occupies residues 1-19; sequence MGTTARAALVLTYLAVASA. Disordered regions lie at residues 41–85 and 120–175; these read VGYA…EATP and LQHP…PSPD. Composition is skewed to polar residues over residues 71 to 85 and 146 to 156; these read GQSQ…EATP and NAAQHCQQDRS. A run of 2 repeats spans residues 150–279 and 283–405. Residues 150 to 405 form a 2 X approximate repeats region; it reads HCQQDRSQGG…FARRAPYPNY (256 aa). N354 carries an N-linked (GlcNAc...) asparagine glycan. N444 is a glycosylation site (N-linked (GlcNAc...) (complex) asparagine). A disordered region spans residues 515–540; that stretch reads ENAKGQGEQGSTGGTNISSTSEPKEE. Residues 528-540 show a composition bias toward low complexity; sequence GTNISSTSEPKEE. N530 carries an N-linked (GlcNAc...) asparagine glycan.

In terms of assembly, interacts (via C-terminus) with HSPG2 (via C-terminus). Interacts with EFEMP1/FBLN3 and LAMB3. Interacts with MMP9. In terms of tissue distribution, expressed in breast cancer tissues. Little or no expression observed in normal breast tissues. Expressed in skin; wide expression is observed throughout the dermis with minimal expression in the epidermis.

Its subcellular location is the secreted. The protein resides in the extracellular space. It is found in the extracellular matrix. Involved in endochondral bone formation as negative regulator of bone mineralization. Stimulates the proliferation of endothelial cells and promotes angiogenesis. Inhibits MMP9 proteolytic activity. This is Extracellular matrix protein 1 (ECM1) from Homo sapiens (Human).